The chain runs to 1101 residues: MDVGTMGSRAELLAISIQFGGLWVFRDLLQMNPLFEQDHVFCTFNHPNMGLVLISFAKVDGHILAAYALSKLGPDTFSICYPFSSKLDAFAQTLDLEWQIASMHKEAAACVYEFLCVESVCLHTGENWRESVIEPEYASYIFDTINVFQSSSLTRELYSLGEPNGVREFVVDAIFDIKVDNSWWEDPSNSYWKTVIGSREMFEDSRKKTSSPSPSFASSKDAGTIPAIQKKKSLLIEMMETESTYVERLRHLVNDYALPLRDLAKSSKKLLGLYELNTLFPPCLNKLIQLNSAFLDEFEAIMSDLNFEDIDEKKFEEIDLRLACCFESHFFAFSQHYPRYLEQSNDFGNVLKMASKIPKFVEFHDQVKLNANMNVGLSQLIMEPVQRIPRYSLFLDQIILLTQEGECQHTYVRSVEIIKNIAEMPTVDAEERSRIFAGLQHIIPDLAPNMISNSRNFIDCIDVTREFLKNGQLHLIPYTLILFNDRICLVQRRSKSSIASTILDLRKQNPRNSYSKEKRAQYIGSNMNEAVELTRSMVEENTIFLISKYASSPSFFNEYPILKFRCDFENVRTMDRFYQSFQKALSMNKSQPSCLSFSKLNDFVVFFNNYSRFEYEKESKRSDIVCICTNDANVDKHKFLQDGNIVITFFQQDEDFHLSFDSWLGVSLPTEAVIAKEDLREACLNYLINIKRLLLCPFSNRNFSSLDLYSNLIQHLLSANSSPRKSRLSFGGRPGSPSKISLSLNRFYNQGGLSKSCATLPSQMYNLDHNNISQKSLKFNTHNTSKASAEKTVEHLEAFKGGFKYHTDLKNLLYPLSEKEKIEGDELYDNILKETFNEELLSHYPPNIIYATFQKYLSSFINRKFGVLLSSSFIQQLNTVENLNLSFNSTDAVYHLKKILQDLPESSLKILENIFSIASDLLLRLPLKDQCDFVTKQLAIALAPSMFGSNAVELVYYLAYHSDRIFGTVEELPTPVSPANSNNDKQLDESKFQAIAMKEMPERHPKEILPGQIEREAYEDLRRKYHLTLARLAQMTRLNEDSKKSIPLLYDRFNHDLKLIKQSVQASLIRKQCELDTAKWTLEEYESKLNAKEGCQTNIFI.

Positions 203 to 222 (EDSRKKTSSPSPSFASSKDA) are disordered. The span at 210-219 (SSPSPSFASS) shows a compositional bias: low complexity. Positions 230–428 (KKKSLLIEMM…KNIAEMPTVD (199 aa)) constitute a DH domain. 2 positions are modified to phosphoserine: Ser736 and Ser977.

It is found in the cytoplasm. It localises to the cytoskeleton. The protein resides in the microtubule organizing center. The protein localises to the spindle pole body. Its function is as follows. Has a role in the control of cell polarity and cytokinesis. Involved in bipolar growth and septum formation. This Schizosaccharomyces pombe (strain 972 / ATCC 24843) (Fission yeast) protein is Rho guanine nucleotide exchange factor gef2 (gef2).